The sequence spans 125 residues: uncharacterized protein (125 aa).

A disordered region spans residues 36 to 57; the sequence is EAKKAKEKQDSKTKDTDKKVDQ. The chain crosses the membrane as a helical span at residues 92 to 112; sequence ITIFLLIVLVSAIMIGIYFGI.

Its subcellular location is the membrane. This is an uncharacterized protein from Mycoplasma pneumoniae (strain ATCC 29342 / M129 / Subtype 1) (Mycoplasmoides pneumoniae).